The following is a 264-amino-acid chain: Phosphonates import ATP-binding protein PhnC (264 aa).

In terms of domain architecture, ABC transporter spans 7–254 (LSIRAASKTF…KLIDIYGPEF (248 aa)). Residue 39–46 (GPSGSGKS) coordinates ATP.

It belongs to the ABC transporter superfamily. Phosphonates importer (TC 3.A.1.9.1) family. As to quaternary structure, the complex is composed of two ATP-binding proteins (PhnC), two transmembrane proteins (PhnE) and a solute-binding protein (PhnD).

The protein resides in the cell inner membrane. The catalysed reaction is phosphonate(out) + ATP + H2O = phosphonate(in) + ADP + phosphate + H(+). Its function is as follows. Part of the ABC transporter complex PhnCDE involved in phosphonates import. Responsible for energy coupling to the transport system. This chain is Phosphonates import ATP-binding protein PhnC, found in Caulobacter vibrioides (strain ATCC 19089 / CIP 103742 / CB 15) (Caulobacter crescentus).